Consider the following 154-residue polypeptide: MFGAEKGSTDKLDGRKFSIGIVQARFNESVTNALAEACKQELAALGVEEKNIKHVKVPGALEVPCALQAMAESDKYDALIALGCIIRGETYHFELVANESGSAVTRLALDYQLPIANAILTTENLAQAEARQIEKGRDAARVAVEMANLLDELA.

5-amino-6-(D-ribitylamino)uracil is bound by residues Phe26, 60-62 (ALE), and 84-86 (CII). A (2S)-2-hydroxy-3-oxobutyl phosphate-binding site is contributed by 89–90 (ET). The active-site Proton donor is His92. A 5-amino-6-(D-ribitylamino)uracil-binding site is contributed by Asn117. A (2S)-2-hydroxy-3-oxobutyl phosphate-binding site is contributed by Arg131.

It belongs to the DMRL synthase family.

The catalysed reaction is (2S)-2-hydroxy-3-oxobutyl phosphate + 5-amino-6-(D-ribitylamino)uracil = 6,7-dimethyl-8-(1-D-ribityl)lumazine + phosphate + 2 H2O + H(+). The protein operates within cofactor biosynthesis; riboflavin biosynthesis; riboflavin from 2-hydroxy-3-oxobutyl phosphate and 5-amino-6-(D-ribitylamino)uracil: step 1/2. Functionally, catalyzes the formation of 6,7-dimethyl-8-ribityllumazine by condensation of 5-amino-6-(D-ribitylamino)uracil with 3,4-dihydroxy-2-butanone 4-phosphate. This is the penultimate step in the biosynthesis of riboflavin. The protein is 6,7-dimethyl-8-ribityllumazine synthase of Polaromonas sp. (strain JS666 / ATCC BAA-500).